Reading from the N-terminus, the 280-residue chain is Sulfur carrier protein FdhD (280 aa).

The active-site Cysteine persulfide intermediate is the C121. Mo-bis(molybdopterin guanine dinucleotide) is bound at residue 258 to 263; it reads FSRPGR.

Belongs to the FdhD family.

The protein localises to the cytoplasm. Required for formate dehydrogenase (FDH) activity. Acts as a sulfur carrier protein that transfers sulfur from IscS to the molybdenum cofactor prior to its insertion into FDH. This is Sulfur carrier protein FdhD from Cronobacter sakazakii (strain ATCC BAA-894) (Enterobacter sakazakii).